The chain runs to 132 residues: Protein NrdI (132 aa).

Belongs to the NrdI family.

In terms of biological role, probably involved in ribonucleotide reductase function. This chain is Protein NrdI, found in Agrobacterium fabrum (strain C58 / ATCC 33970) (Agrobacterium tumefaciens (strain C58)).